Here is a 483-residue protein sequence, read N- to C-terminus: 3-isopropylmalate dehydratase large subunit (483 aa).

[4Fe-4S] cluster contacts are provided by Cys361, Cys424, and Cys427.

It belongs to the aconitase/IPM isomerase family. LeuC type 1 subfamily. Heterodimer of LeuC and LeuD. [4Fe-4S] cluster serves as cofactor.

The catalysed reaction is (2R,3S)-3-isopropylmalate = (2S)-2-isopropylmalate. It functions in the pathway amino-acid biosynthesis; L-leucine biosynthesis; L-leucine from 3-methyl-2-oxobutanoate: step 2/4. In terms of biological role, catalyzes the isomerization between 2-isopropylmalate and 3-isopropylmalate, via the formation of 2-isopropylmaleate. This Polaromonas naphthalenivorans (strain CJ2) protein is 3-isopropylmalate dehydratase large subunit.